We begin with the raw amino-acid sequence, 432 residues long: Glutamate-1-semialdehyde 2,1-aminomutase (432 aa).

Lys271 bears the N6-(pyridoxal phosphate)lysine mark.

This sequence belongs to the class-III pyridoxal-phosphate-dependent aminotransferase family. HemL subfamily. As to quaternary structure, homodimer. The cofactor is pyridoxal 5'-phosphate.

The protein localises to the cytoplasm. The enzyme catalyses (S)-4-amino-5-oxopentanoate = 5-aminolevulinate. Its pathway is porphyrin-containing compound metabolism; protoporphyrin-IX biosynthesis; 5-aminolevulinate from L-glutamyl-tRNA(Glu): step 2/2. The sequence is that of Glutamate-1-semialdehyde 2,1-aminomutase from Protochlamydia amoebophila (strain UWE25).